A 220-amino-acid chain; its full sequence is UPF0441 protein Spro_4274 (220 aa).

The disordered stretch occupies residues M181–G220. Over residues Q203–G220 the composition is skewed to low complexity.

Belongs to the UPF0441 family.

The chain is UPF0441 protein Spro_4274 from Serratia proteamaculans (strain 568).